A 474-amino-acid polypeptide reads, in one-letter code: Protein NAR1 (474 aa).

[4Fe-4S] cluster is bound by residues Cys24, Cys61, Cys64, Cys67, Cys177, Cys233, Cys390, and Cys394.

The protein belongs to the NARF family. In terms of assembly, part of a complex composed of AE7, CIA1, MMS19 and NAR1. Interacts with CIA1. Expressed in developing tissues, including shoot apex, young leaves, vascular tissues, root tips, pedicels, carpels and developing seeds.

Its subcellular location is the nucleus. The protein resides in the cytoplasm. Its function is as follows. Essential component of the cytosolic iron-sulfur (Fe-S) protein assembly (CIA) machinery. Required for the maturation of extramitochondrial Fe/S proteins. Required for expression of the imprinted FWA gene, for seed development and is involved in the oxidative stress response in vegetative tissues. Involved in the regulation of cell size, ploidy and cell cycle progression. Required for growth under normoxic conditions and necessary for recovery after hypoxic treatment but its action is reactive oxygen species (ROS) independent. This chain is Protein NAR1, found in Arabidopsis thaliana (Mouse-ear cress).